The sequence spans 214 residues: Adenylate kinase (214 aa).

Position 10–15 (10–15) interacts with ATP; sequence GAGKGT. The NMP stretch occupies residues 30–59; that stretch reads STGDMFRDHKARGTELGKTVQAIMDAGGLV. AMP is bound by residues Thr31, Arg36, 57–59, 85–88, and Gln92; these read GLV and GYPR. The tract at residues 126–163 is LID; the sequence is GRRSCPKCGAVYHVSANPPRRMGYCDRDDAGLVQRDDD. Arg127 contributes to the ATP binding site. Residues Cys130 and Cys133 each contribute to the Zn(2+) site. Residue 136–137 participates in ATP binding; that stretch reads VY. Zn(2+) contacts are provided by Cys150 and Asp153. Residues Arg160 and Arg171 each coordinate AMP. An ATP-binding site is contributed by Gly199.

It belongs to the adenylate kinase family. In terms of assembly, monomer.

It is found in the cytoplasm. It catalyses the reaction AMP + ATP = 2 ADP. It participates in purine metabolism; AMP biosynthesis via salvage pathway; AMP from ADP: step 1/1. Catalyzes the reversible transfer of the terminal phosphate group between ATP and AMP. Plays an important role in cellular energy homeostasis and in adenine nucleotide metabolism. The sequence is that of Adenylate kinase from Anaeromyxobacter sp. (strain Fw109-5).